We begin with the raw amino-acid sequence, 279 residues long: Tryptophan synthase alpha chain (279 aa).

Active-site proton acceptor residues include glutamate 50 and aspartate 61.

It belongs to the TrpA family. Tetramer of two alpha and two beta chains.

The enzyme catalyses (1S,2R)-1-C-(indol-3-yl)glycerol 3-phosphate + L-serine = D-glyceraldehyde 3-phosphate + L-tryptophan + H2O. It functions in the pathway amino-acid biosynthesis; L-tryptophan biosynthesis; L-tryptophan from chorismate: step 5/5. The alpha subunit is responsible for the aldol cleavage of indoleglycerol phosphate to indole and glyceraldehyde 3-phosphate. The chain is Tryptophan synthase alpha chain from Allorhizobium ampelinum (strain ATCC BAA-846 / DSM 112012 / S4) (Agrobacterium vitis (strain S4)).